The primary structure comprises 255 residues: Myb-related protein Zm38 (255 aa).

HTH myb-type domains follow at residues 9–61 and 62–116; these read KAHT…INYL and RPDL…RRKL. 2 DNA-binding regions (H-T-H motif) span residues 37-61 and 89-112; these read WRSL…INYL and WSLI…NTHV.

It localises to the nucleus. Functionally, transcription factor that negatively regulates genes involved in anthocyanin biosynthesis. The polypeptide is Myb-related protein Zm38 (Zea mays (Maize)).